The following is a 540-amino-acid chain: Putative laccase-11 (540 aa).

3 Plastocyanin-like domains span residues 1–114 (MATV…PPRG), 124–279 (REVP…YYGA), and 389–523 (NFPA…NDGP). Cu cation is bound by residues His-48, His-50, His-93, and His-95. Cu cation contacts are provided by His-440, His-443, His-445, His-502, Cys-503, His-504, and His-508.

Belongs to the multicopper oxidase family. Requires Cu cation as cofactor.

It localises to the secreted. The protein localises to the extracellular space. Its subcellular location is the apoplast. The enzyme catalyses 4 hydroquinone + O2 = 4 benzosemiquinone + 2 H2O. Lignin degradation and detoxification of lignin-derived products. The sequence is that of Putative laccase-11 (LAC11) from Oryza sativa subsp. japonica (Rice).